We begin with the raw amino-acid sequence, 449 residues long: Probable hexaprenyl pyrophosphate synthase, mitochondrial (449 aa).

Isopentenyl diphosphate is bound by residues K122, R125, and H200. Residues D207 and D211 each contribute to the Mg(2+) site. R216 is an an all-trans-polyprenyl diphosphate binding site. Isopentenyl diphosphate is bound at residue R217. Residues K300, T301, Q338, and K355 each coordinate an all-trans-polyprenyl diphosphate.

Belongs to the FPP/GGPP synthase family. The cofactor is Mg(2+).

The protein localises to the mitochondrion. The protein operates within cofactor biosynthesis; ubiquinone biosynthesis. Its function is as follows. Assembly of polyisoprenoid side chains. The polyprenyl synthase of coenzyme Q biosynthesis catalyzes the formation from isopentenyl diphosphate of all trans-polyprenyl pyrophosphates generally ranging in length of between 6 and 10 isoprene units depending on the species. In Neurospora crassa (strain ATCC 24698 / 74-OR23-1A / CBS 708.71 / DSM 1257 / FGSC 987), this protein is Probable hexaprenyl pyrophosphate synthase, mitochondrial.